A 235-amino-acid polypeptide reads, in one-letter code: Exosome complex component RRP46 (235 aa).

The segment at 1–21 is disordered; that stretch reads MEGAKRADANLLTDTGTESSP. Residues 12–21 show a composition bias toward polar residues; that stretch reads LTDTGTESSP. Phosphoserine occurs at positions 20 and 23.

The protein belongs to the RNase PH family. As to quaternary structure, homodimer. Component of the RNA exosome core complex (Exo-9), composed of EXOSC1, EXOSC2, EXOSC3, EXOSC4, EXOSC5, EXOSC6, EXOSC7, EXOSC8 and EXOSC9; within the complex interacts with EXOSC3, EXOSC8, and EXOSC9. The catalytically inactive RNA exosome core complex (Exo-9) associates with the catalytic subunit EXOSC10/RRP6. Exo-9 may associate with DIS3 to form the nucleolar exosome complex, or DIS3L to form the cytoplasmic exosome complex. Exo-9 is formed by a hexameric base ring consisting of the heterodimers EXOSC4-EXOSC9, EXOSC5-EXOSC8 and EXOSC6-EXOSC7, and a cap ring consisting of EXOSC1, EXOSC2 and EXOSC3. The RNA exosome complex associates with cofactors C1D/RRP47, MPHOSPH6/MPP6 and MTREX/MTR4. Interacts with GTPBP1. Interacts with ZC3HAV1. Interacts with DDX17 only in the presence of ZC3HAV1 in an RNA-independent manner.

It localises to the nucleus. The protein resides in the nucleolus. The protein localises to the cytoplasm. Its function is as follows. Non-catalytic component of the RNA exosome complex which has 3'-&gt;5' exoribonuclease activity and participates in a multitude of cellular RNA processing and degradation events. In the nucleus, the RNA exosome complex is involved in proper maturation of stable RNA species such as rRNA, snRNA and snoRNA, in the elimination of RNA processing by-products and non-coding 'pervasive' transcripts, such as antisense RNA species and promoter-upstream transcripts (PROMPTs), and of mRNAs with processing defects, thereby limiting or excluding their export to the cytoplasm. The RNA exosome may be involved in Ig class switch recombination (CSR) and/or Ig variable region somatic hypermutation (SHM) by targeting AICDA deamination activity to transcribed dsDNA substrates. In the cytoplasm, the RNA exosome complex is involved in general mRNA turnover and specifically degrades inherently unstable mRNAs containing AU-rich elements (AREs) within their 3' untranslated regions, and in RNA surveillance pathways, preventing translation of aberrant mRNAs. It seems to be involved in degradation of histone mRNA. The catalytic inactive RNA exosome core complex of 9 subunits (Exo-9) is proposed to play a pivotal role in the binding and presentation of RNA for ribonucleolysis, and to serve as a scaffold for the association with catalytic subunits and accessory proteins or complexes. In vitro, EXOSC5 does not bind or digest single-stranded RNA and binds to double-stranded DNA without detectable DNase activity. The polypeptide is Exosome complex component RRP46 (Exosc5) (Mus musculus (Mouse)).